Reading from the N-terminus, the 773-residue chain is Ethylene receptor 2 (773 aa).

4 consecutive transmembrane segments (helical) span residues 4–24, 53–73, 82–102, and 122–142; these read EIAS…VLAI, VSDF…LYFV, WVLF…LLHG, and LTAL…PLLL. Cu cation contacts are provided by C94 and H98. One can recognise a GAF domain in the interval 187–331; it reads DRHTILYTTL…VVADQVTVAL (145 aa). Positions 374–614 constitute a Histidine kinase domain; that stretch reads TMSEGMRRPM…PETMSLLLRF (241 aa). Residues 647–766 enclose the Response regulatory domain; sequence QVLLVDTNDS…AMESELRRVL (120 aa). D702 bears the 4-aspartylphosphate mark. Residue K751 forms a Glycyl lysine isopeptide (Lys-Gly) (interchain with G-Cter in ubiquitin) linkage.

This sequence belongs to the ethylene receptor family. Heteromer with ETR1. Binds to MRF3/ECIP1. It depends on Cu cation as a cofactor. Post-translationally, autophosphorylated predominantly on Ser residues. In terms of tissue distribution, expressed in seedlings, roots, leaves, flowers, mature siliques, shoot apical meristems, leaf primordia, inflorescence meristems, young floral meristems, developing petals, carpels and ovules. Low expression in stamens.

The protein localises to the endoplasmic reticulum membrane. Ethylene receptor related to bacterial two-component regulators. Acts as a redundant negative regulator of ethylene signaling. The polypeptide is Ethylene receptor 2 (Arabidopsis thaliana (Mouse-ear cress)).